The chain runs to 88 residues: Large ribosomal subunit protein bL27 (88 aa).

Residues 1–23 form a disordered region; that stretch reads MAHKKAGGSSRNGRDSAGRRLGV.

Belongs to the bacterial ribosomal protein bL27 family.

This Methylorubrum populi (strain ATCC BAA-705 / NCIMB 13946 / BJ001) (Methylobacterium populi) protein is Large ribosomal subunit protein bL27.